We begin with the raw amino-acid sequence, 277 residues long: Large ribosomal subunit protein uL2 (277 aa).

Residues 223 to 261 form a disordered region; that stretch reads SVMNPNDHPHGGGEGKSPVGRPSPVTPWGKPALGYKTRK.

It belongs to the universal ribosomal protein uL2 family. In terms of assembly, part of the 50S ribosomal subunit. Forms a bridge to the 30S subunit in the 70S ribosome.

In terms of biological role, one of the primary rRNA binding proteins. Required for association of the 30S and 50S subunits to form the 70S ribosome, for tRNA binding and peptide bond formation. It has been suggested to have peptidyltransferase activity; this is somewhat controversial. Makes several contacts with the 16S rRNA in the 70S ribosome. In Clostridium botulinum (strain Alaska E43 / Type E3), this protein is Large ribosomal subunit protein uL2.